The following is a 118-amino-acid chain: Class II hydrophobin CRP (118 aa).

The signal sequence occupies residues 1–22 (MQFSIIAISFLASLAMASPAKR). The disordered stretch occupies residues 20–46 (AKRGGGGGGSGSGSGSGSGSGSGGGST). The segment covering 22 to 45 (RGGGGGGSGSGSGSGSGSGSGGGS) has biased composition (gly residues). A run of 7 repeats spans residues 29–30 (SG), 31–32 (SG), 33–34 (SG), 35–36 (SG), 37–38 (SG), 39–40 (SG), and 41–42 (SG). Residues 29-42 (SGSGSGSGSGSGSG) are 7 X 2 AA tandem repeats of S-G. Cystine bridges form between cysteine 51–cysteine 100, cysteine 61–cysteine 91, cysteine 62–cysteine 74, and cysteine 101–cysteine 112.

The protein belongs to the cerato-ulmin hydrophobin family. Homotetramer. Further self-assembles to form highly ordered films at water-air interfaces through intermolecular interactions.

It localises to the secreted. The protein localises to the cell wall. In terms of biological role, aerial growth, conidiation, and dispersal of filamentous fungi in the environment rely upon a capability of their secreting small amphipathic proteins called hydrophobins (HPBs) with low sequence identity. Class I can self-assemble into an outermost layer of rodlet bundles on aerial cell surfaces, conferring cellular hydrophobicity that supports fungal growth, development and dispersal; whereas Class II form highly ordered films at water-air interfaces through intermolecular interactions but contribute nothing to the rodlet structure. Cryparin is a class II hydrophobin that is the most abundant protein produced by this fungus when grown in liquid culture and that plays an essential role in the fitness of this important plant pathogen by facilitating the eruption of the fungal fruiting bodies through the bark of its host tree. This is Class II hydrophobin CRP from Cryphonectria parasitica (Chestnut blight fungus).